Consider the following 388-residue polypeptide: Processive diacylglycerol beta-glucosyltransferase (388 aa).

This sequence belongs to the glycosyltransferase 28 family. UgtP subfamily.

It localises to the cell membrane. The enzyme catalyses a 1,2-diacyl-3-O-(beta-D-glucopyranosyl)-sn-glycerol + UDP-alpha-D-glucose = a 1,2-diacyl-3-O-(beta-D-Glc-(1-&gt;6)-beta-D-Glc)-sn-glycerol + UDP + H(+). It carries out the reaction a 1,2-diacyl-3-O-(beta-D-Glc-(1-&gt;6)-beta-D-Glc)-sn-glycerol + UDP-alpha-D-glucose = a 1,2-diacyl-3-O-(beta-D-Glc-(1-&gt;6)-beta-D-Glc-(1-&gt;6)-beta-D-Glc)-sn-glycerol + UDP + H(+). It catalyses the reaction a 1,2-diacyl-sn-glycerol + UDP-alpha-D-glucose = a 1,2-diacyl-3-O-(beta-D-glucopyranosyl)-sn-glycerol + UDP + H(+). It participates in glycolipid metabolism; diglucosyl-diacylglycerol biosynthesis. Its function is as follows. Processive glucosyltransferase involved in the biosynthesis of both the bilayer- and non-bilayer-forming membrane glucolipids. Is able to successively transfer up to three glucosyl residues to diacylglycerol (DAG), thereby catalyzing the formation of beta-monoglucosyl-DAG (3-O-(beta-D-glucopyranosyl)-1,2-diacyl-sn-glycerol), beta-diglucosyl-DAG (3-O-(beta-D-glucopyranosyl-beta-(1-&gt;6)-D-glucopyranosyl)-1,2-diacyl-sn-glycerol) and beta-triglucosyl-DAG (3-O-(beta-D-glucopyranosyl-beta-(1-&gt;6)-D-glucopyranosyl-beta-(1-&gt;6)-D-glucopyranosyl)-1,2-diacyl-sn-glycerol). Beta-diglucosyl-DAG is the predominant glycolipid found in Bacillales and is also used as a membrane anchor for lipoteichoic acid (LTA). In Bacillus thuringiensis (strain Al Hakam), this protein is Processive diacylglycerol beta-glucosyltransferase.